A 597-amino-acid polypeptide reads, in one-letter code: Elongation factor 4 (597 aa).

A tr-type G domain is found at 2–184 (DHIRNFSIIA…ALIAKVPPPK (183 aa)). Residues 14–19 (DHGKST) and 131–134 (NKID) each bind GTP.

This sequence belongs to the TRAFAC class translation factor GTPase superfamily. Classic translation factor GTPase family. LepA subfamily.

The protein resides in the cell inner membrane. The catalysed reaction is GTP + H2O = GDP + phosphate + H(+). In terms of biological role, required for accurate and efficient protein synthesis under certain stress conditions. May act as a fidelity factor of the translation reaction, by catalyzing a one-codon backward translocation of tRNAs on improperly translocated ribosomes. Back-translocation proceeds from a post-translocation (POST) complex to a pre-translocation (PRE) complex, thus giving elongation factor G a second chance to translocate the tRNAs correctly. Binds to ribosomes in a GTP-dependent manner. This chain is Elongation factor 4, found in Burkholderia vietnamiensis (strain G4 / LMG 22486) (Burkholderia cepacia (strain R1808)).